Consider the following 403-residue polypeptide: G-protein coupled receptor family C group 5 member B (403 aa).

The N-terminal stretch at 1–28 (MFVASERKMRAHQVLTFLLLFVITSVAS) is a signal peptide. At 29–56 (ENASTSRGCGLDLLPQYVSLCDLDAIWG) the chain is on the extracellular side. The N-linked (GlcNAc...) asparagine glycan is linked to N30. The chain crosses the membrane as a helical span at residues 57–77 (IVVEAVAGAGALITLLLMLIL). At 78–94 (LVRLPFIKEKEKKSPVG) the chain is on the cytoplasmic side. A helical membrane pass occupies residues 95-115 (LHFLFLLGTLGLFGLTFAFII). Topologically, residues 116–126 (QEDETICSVRR) are extracellular. Residues 127-147 (FLWGVLFALCFSCLLSQAWRV) traverse the membrane as a helical segment. Residues 148 to 162 (RRLVRHGTGPAGWQL) lie on the Cytoplasmic side of the membrane. A helical transmembrane segment spans residues 163–183 (VGLALCLMLVQVIIAVEWLVL). Topologically, residues 184 to 199 (TVLRDTRPACAYEPMD) are extracellular. A helical membrane pass occupies residues 200–220 (FVMALIYDMVLLVVTLGLALF). At 221–234 (TLCGKFKRWKLNGA) the chain is on the cytoplasmic side. Residues 235–255 (FLLITAFLSVLIWVAWMTMYL) form a helical membrane-spanning segment. At 256 to 271 (FGNVKLQQGDAWNDPT) the chain is on the extracellular side. A helical transmembrane segment spans residues 272-292 (LAITLAASGWVFVIFHAIPEI). Topologically, residues 293-403 (HCTLLPALQE…PPSHTGRHLW (111 aa)) are cytoplasmic. Positions 349–371 (GFPNGSLGKRPSGSLGKRPSAPF) are disordered. A Phosphoserine modification is found at S354.

This sequence belongs to the G-protein coupled receptor 3 family. Expression is high in kidney, pancreas, and testis, medium in brain, heart, prostate, small intestine, and spleen, low in liver, placenta, skeletal muscle, colon, ovary, and thymus, and not detectable in lung and peripheral leukocyte. According to PubMed:10945465, highly expressed in most brain areas examined, with the highest levels observed in corpus callosum, caudate nucleus, putamen, substantia nigra, thalamus, hippocampus, and spinal cord as well as in dorsal root ganglia (DRG). Expressed in glia limitans, ependymal cells, astrocyte cell bodies, the perivascular region in astrocyte endfeet, but not in neurons. In the periphery, expression levels are relatively low, compared to the CNS, with the strongest expression detected in pancreas, testis, uterus, and stomach.

It localises to the cell membrane. It is found in the cytoplasmic vesicle membrane. Functionally, G-protein coupled receptor involved in the regulation of cell volume. This chain is G-protein coupled receptor family C group 5 member B (GPRC5B), found in Homo sapiens (Human).